Here is a 450-residue protein sequence, read N- to C-terminus: 3-keto-steroid reductase erg27 (450 aa).

3 residues coordinate NADP(+): Leu-25, Thr-53, and Lys-59. Residues Ser-215 and Tyr-238 each act as proton donor in the active site. Tyr-238, Lys-242, and Thr-296 together coordinate NADP(+). Lys-242 acts as the Lowers pKa of active site Tyr in catalysis.

This sequence belongs to the short-chain dehydrogenases/reductases (SDR) family. ERG27 subfamily. Heterotetramer of erg25, erg26, erg27 and erg28. Erg28 acts as a scaffold to tether erg27 and other 4,4-demethylation-related enzymes, forming a demethylation enzyme complex, in the endoplasmic reticulum.

Its subcellular location is the endoplasmic reticulum membrane. The protein localises to the lipid droplet. The protein operates within steroid metabolism; ergosterol biosynthesis. Sterol-C4-methyl oxidase; part of the third module of ergosterol biosynthesis pathway that includes the late steps of the pathway. Erg27 is a catalytic component of the C-4 demethylation complex that catalyzes the conversion of 4,4-dimethylfecosterol into fecosterol via 4-methylfecosterol. The third module or late pathway involves the ergosterol synthesis itself through consecutive reactions that mainly occur in the endoplasmic reticulum (ER) membrane. Firstly, the squalene synthase erg9 catalyzes the condensation of 2 farnesyl pyrophosphate moieties to form squalene, which is the precursor of all steroids. Squalene synthase is crucial for balancing the incorporation of farnesyl diphosphate (FPP) into sterol and nonsterol isoprene synthesis. Secondly, squalene is converted into lanosterol by the consecutive action of the squalene epoxidase erg1 and the lanosterol synthase erg7. Then, the delta(24)-sterol C-methyltransferase erg6 methylates lanosterol at C-24 to produce eburicol. Eburicol is the substrate of the sterol 14-alpha demethylase encoded by cyp51A and cyp51B, to yield 4,4,24-trimethyl ergosta-8,14,24(28)-trienol. The C-14 reductase erg24 then reduces the C14=C15 double bond which leads to 4,4-dimethylfecosterol. A sequence of further demethylations at C-4, involving the C-4 demethylation complex containing the C-4 methylsterol oxidases erg25A or erg25B, the sterol-4-alpha-carboxylate 3-dehydrogenase erg26 and the 3-keto-steroid reductase erg27, leads to the production of fecosterol via 4-methylfecosterol. The C-8 sterol isomerase erg2 then catalyzes the reaction which results in unsaturation at C-7 in the B ring of sterols and thus converts fecosterol to episterol. The sterol-C5-desaturase erg3B then catalyzes the introduction of a C-5 double bond in the B ring to produce 5-dehydroepisterol. The 2 other sterol-C5-desaturases, erg3A and erg3C, seem to be less important in ergosterol biosynthesis. The C-22 sterol desaturase erg5 further converts 5-dehydroepisterol into ergosta-5,7,22,24(28)-tetraen-3beta-ol by forming the C-22(23) double bond in the sterol side chain. Finally, ergosta-5,7,22,24(28)-tetraen-3beta-ol is substrate of the C-24(28) sterol reductases erg4A and erg4B to produce ergosterol. Possible alternative sterol biosynthetic pathways might exist from fecosterol to ergosterol, depending on the activities of the erg3 isoforms. In Aspergillus fumigatus (strain ATCC MYA-4609 / CBS 101355 / FGSC A1100 / Af293) (Neosartorya fumigata), this protein is 3-keto-steroid reductase erg27.